Reading from the N-terminus, the 225-residue chain is Ribonuclease 3 (225 aa).

Residues 5–127 (IDKLERKLGY…IIGAIYLDSD (123 aa)) form the RNase III domain. Glu-40 contacts Mg(2+). Asp-44 is an active-site residue. Mg(2+) is bound by residues Asp-113 and Glu-116. Residue Glu-116 is part of the active site. The DRBM domain maps to 154–224 (DPKTRLQEFL…AETALEQLTN (71 aa)). Residues 204 to 225 (GTSRRKAEQAAAETALEQLTNG) are disordered. Residues 212–225 (QAAAETALEQLTNG) show a composition bias toward low complexity.

This sequence belongs to the ribonuclease III family. As to quaternary structure, homodimer. The cofactor is Mg(2+).

The protein localises to the cytoplasm. The catalysed reaction is Endonucleolytic cleavage to 5'-phosphomonoester.. Digests double-stranded RNA. Involved in the processing of primary rRNA transcript to yield the immediate precursors to the large and small rRNAs (23S and 16S). Processes some mRNAs, and tRNAs when they are encoded in the rRNA operon. Processes pre-crRNA and tracrRNA of type II CRISPR loci if present in the organism. The chain is Ribonuclease 3 from Vibrio parahaemolyticus serotype O3:K6 (strain RIMD 2210633).